The sequence spans 374 residues: Protein dip1 (374 aa).

The protein belongs to the LDB17 family.

It localises to the cytoplasm. Its subcellular location is the nucleus. The protein localises to the cell tip. In terms of biological role, may be involved in protein-linked oligosaccharide phosphorylation. This Schizosaccharomyces pombe (strain 972 / ATCC 24843) (Fission yeast) protein is Protein dip1 (dip1).